Reading from the N-terminus, the 141-residue chain is Nucleoside triphosphatase NudI (141 aa).

The 141-residue stretch at 1–141 (MRQRTIVCPL…RHTLALKGLL (141 aa)) folds into the Nudix hydrolase domain. The Nudix box motif lies at 38–59 (GGVEPGERIEEALRREIREELG).

This sequence belongs to the Nudix hydrolase family. NudI subfamily. As to quaternary structure, monomer. Mg(2+) is required as a cofactor.

The enzyme catalyses a ribonucleoside 5'-triphosphate + H2O = a ribonucleoside 5'-phosphate + diphosphate + H(+). It carries out the reaction a 2'-deoxyribonucleoside 5'-triphosphate + H2O = a 2'-deoxyribonucleoside 5'-phosphate + diphosphate + H(+). The catalysed reaction is dUTP + H2O = dUMP + diphosphate + H(+). It catalyses the reaction dTTP + H2O = dTMP + diphosphate + H(+). The enzyme catalyses dCTP + H2O = dCMP + diphosphate + H(+). Its function is as follows. Catalyzes the hydrolysis of nucleoside triphosphates, with a preference for pyrimidine deoxynucleoside triphosphates (dUTP, dTTP and dCTP). The chain is Nucleoside triphosphatase NudI from Salmonella paratyphi B (strain ATCC BAA-1250 / SPB7).